The following is a 144-amino-acid chain: Large ribosomal subunit protein uL15 (144 aa).

Over residues M1–R10 the composition is skewed to polar residues. A disordered region spans residues M1–E51. Residues G11–G20 show a composition bias toward basic residues. The segment covering R21 to G31 has biased composition (gly residues). Residues G32–G44 are compositionally biased toward basic residues.

Belongs to the universal ribosomal protein uL15 family. Part of the 50S ribosomal subunit.

Functionally, binds to the 23S rRNA. The protein is Large ribosomal subunit protein uL15 of Blochmanniella pennsylvanica (strain BPEN).